We begin with the raw amino-acid sequence, 313 residues long: Fructose-1,6-bisphosphatase class 1 (313 aa).

E90, D111, L113, and D114 together coordinate Mg(2+). Substrate contacts are provided by residues 114–117, Y222, and K253; that span reads DGSS. E259 is a Mg(2+) binding site.

This sequence belongs to the FBPase class 1 family. As to quaternary structure, homotetramer. Mg(2+) is required as a cofactor.

It localises to the cytoplasm. It catalyses the reaction beta-D-fructose 1,6-bisphosphate + H2O = beta-D-fructose 6-phosphate + phosphate. The protein operates within carbohydrate biosynthesis; gluconeogenesis. The polypeptide is Fructose-1,6-bisphosphatase class 1 (Geotalea uraniireducens (strain Rf4) (Geobacter uraniireducens)).